The primary structure comprises 421 residues: Elsinochrome C biosynthesis regulatory protein elcR (421 aa).

Positions 1–16 are enriched in polar residues; that stretch reads MATQLPSPTATTSHSG. Residues 1–20 form a disordered region; sequence MATQLPSPTATTSHSGNEPR. The zn(2)-C6 fungal-type DNA-binding region spans 27–54; sequence CNNCSAQKIRCGKQRPACARCVNKKLQC.

Its subcellular location is the nucleus. In terms of biological role, transcription regulator of the gene cluster that mediates the biosynthesis of elsinochrome C, a perelyenequinone phytotoxin structurally similar to cercosporin. In Phaeosphaeria nodorum (strain SN15 / ATCC MYA-4574 / FGSC 10173) (Glume blotch fungus), this protein is Elsinochrome C biosynthesis regulatory protein elcR.